A 176-amino-acid chain; its full sequence is Cytochrome b (176 aa).

Helical transmembrane passes span 33-53 (FGSLLGVCLMMQILTGLFLAM), 77-98 (WLLRYLHANGASMFFICLYLHI), and 113-133 (WNVGIILLFAVMATAFMGYVL). Heme b-binding residues include H83 and H97.

The protein belongs to the cytochrome b family. In terms of assembly, the cytochrome bc1 complex contains 11 subunits: 3 respiratory subunits (MT-CYB, CYC1 and UQCRFS1), 2 core proteins (UQCRC1 and UQCRC2) and 6 low-molecular weight proteins (UQCRH/QCR6, UQCRB/QCR7, UQCRQ/QCR8, UQCR10/QCR9, UQCR11/QCR10 and a cleavage product of UQCRFS1). This cytochrome bc1 complex then forms a dimer. Heme b is required as a cofactor.

It is found in the mitochondrion inner membrane. Its function is as follows. Component of the ubiquinol-cytochrome c reductase complex (complex III or cytochrome b-c1 complex) that is part of the mitochondrial respiratory chain. The b-c1 complex mediates electron transfer from ubiquinol to cytochrome c. Contributes to the generation of a proton gradient across the mitochondrial membrane that is then used for ATP synthesis. In Promops centralis (Big crested mastiff bat), this protein is Cytochrome b (MT-CYB).